A 433-amino-acid polypeptide reads, in one-letter code: Phosphomethylpyrimidine synthase 1 (433 aa).

Substrate contacts are provided by residues Met95, Tyr124, His163, 185–187 (SRG), 226–229 (NAMR), and Glu265. His269 serves as a coordination point for Zn(2+). Residue Tyr292 coordinates substrate. His333 contacts Zn(2+). Residues Cys408, Cys411, and Cys415 each contribute to the [4Fe-4S] cluster site.

Belongs to the ThiC family. [4Fe-4S] cluster serves as cofactor.

It carries out the reaction 5-amino-1-(5-phospho-beta-D-ribosyl)imidazole + S-adenosyl-L-methionine = 4-amino-2-methyl-5-(phosphooxymethyl)pyrimidine + CO + 5'-deoxyadenosine + formate + L-methionine + 3 H(+). Its pathway is cofactor biosynthesis; thiamine diphosphate biosynthesis. In terms of biological role, catalyzes the synthesis of the hydroxymethylpyrimidine phosphate (HMP-P) moiety of thiamine from aminoimidazole ribotide (AIR) in a radical S-adenosyl-L-methionine (SAM)-dependent reaction. This is Phosphomethylpyrimidine synthase 1 from Methanothermobacter thermautotrophicus (strain ATCC 29096 / DSM 1053 / JCM 10044 / NBRC 100330 / Delta H) (Methanobacterium thermoautotrophicum).